A 310-amino-acid polypeptide reads, in one-letter code: Upstream stimulatory factor 1 (310 aa).

Residues 1–17 (MKGQQKTAETEEGTVQI) are compositionally biased toward polar residues. Disordered stretches follow at residues 1-26 (MKGQ…ATGE) and 171-209 (QGGS…EVER). Over residues 190-209 (EAPRTTRDEKRRAQHNEVER) the composition is skewed to basic and acidic residues. One can recognise a bHLH domain in the interval 199-254 (KRRAQHNEVERRRRDKINNWIVQLSKIIPDCSMESTKSGQSKGGILSKACDYIQEL). The leucine-zipper stretch occupies residues 271–292 (LQLDNDVLRQQVEDLKNKNLLL). A Glycyl lysine isopeptide (Lys-Gly) (interchain with G-Cter in SUMO2) cross-link involves residue lysine 306.

As to quaternary structure, efficient DNA binding requires dimerization with another bHLH protein. Binds DNA as a homodimer or a heterodimer (USF1/USF2).

Its subcellular location is the nucleus. Functionally, transcription factor that binds to a symmetrical DNA sequence (E-boxes) (5'-CACGTG-3') that is found in a variety of viral and cellular promoters. The sequence is that of Upstream stimulatory factor 1 (Usf1) from Mus musculus (Mouse).